The following is a 128-amino-acid chain: Probable 4-amino-4-deoxy-L-arabinose-phosphoundecaprenol flippase subunit ArnF (128 aa).

The Cytoplasmic segment spans residues 1–2 (MG). A helical membrane pass occupies residues 3-23 (LMWGLFSVIIASAAQLSLGFA). The Periplasmic portion of the chain corresponds to 24–35 (ASHLPPMTHLWD). A helical membrane pass occupies residues 36–56 (FIAALLAFGLDARILLLGLLG). Topologically, residues 57–76 (YLLSVFCWYKTLHKLALSKA) are cytoplasmic. A helical membrane pass occupies residues 77–97 (YALLSMSYVLVWIASMILPGW). Over 98 to 100 (EGT) the chain is Periplasmic. A helical transmembrane segment spans residues 101-121 (FSLKALLGVACIMSGLMLIFL). The Cytoplasmic portion of the chain corresponds to 122–128 (PTTKQRY).

Belongs to the ArnF family. Heterodimer of ArnE and ArnF.

It is found in the cell inner membrane. It participates in bacterial outer membrane biogenesis; lipopolysaccharide biosynthesis. Translocates 4-amino-4-deoxy-L-arabinose-phosphoundecaprenol (alpha-L-Ara4N-phosphoundecaprenol) from the cytoplasmic to the periplasmic side of the inner membrane. The polypeptide is Probable 4-amino-4-deoxy-L-arabinose-phosphoundecaprenol flippase subunit ArnF (Escherichia coli O17:K52:H18 (strain UMN026 / ExPEC)).